Reading from the N-terminus, the 538-residue chain is Metal transporter Nramp5 (538 aa).

12 consecutive transmembrane segments (helical) span residues 44 to 64, 77 to 97, 118 to 138, 140 to 160, 181 to 201, 227 to 247, 264 to 284, 324 to 346, 365 to 385, 391 to 411, 427 to 447, and 467 to 487; these read FLAHVGPGFMVSLAYLDPGNL, ELLWVILIGLIFALIIQSLAA, FVKIFLWLLAELAVIAADIPE, IGTAFAFNILFHIPVWVGVLI, FLISMLVFVMAACFFGELSIV, IALLGALVMPHNLFLHSALVL, FFLYESGFALFVALLINIAVV, SAIVYGVALLASGQSSTITGTYA, NLMTRTIAIAPSLIVSIIGGS, LIIIASMILSFELPFALIPLL, IYIIVFSWFLGLLIIGINMYF, and VLVGAAVFPFMLVYIVAVVYL. The tract at residues 518 to 538 is disordered; sequence AVDDDEPLPYRDDLADIPLPR.

This sequence belongs to the NRAMP (TC 2.A.55) family.

It localises to the membrane. Functionally, probable metal transporter. The polypeptide is Metal transporter Nramp5 (NRAMP5) (Oryza sativa subsp. japonica (Rice)).